The chain runs to 948 residues: ATPase 2, plasma membrane-type (948 aa).

The residue at position 2 (serine 2) is an N-acetylserine. The Cytoplasmic segment spans residues 2–61; the sequence is SSLEDIKNETVDLEKIPIEEVFQQLKCSREGLTTQEGEDRIQIFGPNKLEEKKESKLLKF. The helical transmembrane segment at 62–81 threads the bilayer; sequence LGFMWNPLSWVMEMAAIMAI. Over 82 to 93 the chain is Extracellular; that stretch reads ALANGDGRPPDW. A helical transmembrane segment spans residues 94-114; the sequence is QDFVGIICLLVINSTISFIEE. The Cytoplasmic portion of the chain corresponds to 115–243; the sequence is NNAGNAAAAL…GHFQKVLTAI (129 aa). A helical transmembrane segment spans residues 244–264; it reads GNFCICSIAIGMVIEIIVMYP. Topologically, residues 265 to 273 are extracellular; sequence IQRRKYRDG. A helical transmembrane segment spans residues 274-291; the sequence is IDNLLVLLIGGIPIAMPT. Over 292–643 the chain is Cytoplasmic; sequence VLSVTMAIGS…TSRAIFQRMK (352 aa). The active-site 4-aspartylphosphate intermediate is aspartate 329. Aspartate 588 and aspartate 592 together coordinate Mg(2+). The helical transmembrane segment at 644–665 threads the bilayer; that stretch reads NYTIYAVSITIRIVFGFMLIAL. Over 666-670 the chain is Extracellular; the sequence is IWEFD. A helical transmembrane segment spans residues 671-693; that stretch reads FSAFMVLIIAILNDGTIMTISKD. Topologically, residues 694-709 are cytoplasmic; the sequence is RVKPSPTPDSWKLKEI. The chain crosses the membrane as a helical span at residues 710-730; sequence FATGVVLGGYQAIMTVIFFWA. Topologically, residues 731-751 are extracellular; the sequence is AHKTDFFSDTFGVRSIRDNNH. Residues 752–772 traverse the membrane as a helical segment; the sequence is ELMGAVYLQVSIISQALIFVT. Residues 773 to 784 are Cytoplasmic-facing; that stretch reads RSRSWSFVERPG. A helical membrane pass occupies residues 785 to 805; it reads ALLMIAFLIAQLIATLIAVYA. The Extracellular portion of the chain corresponds to 806 to 813; the sequence is NWEFAKIR. The chain crosses the membrane as a helical span at residues 814-834; sequence GIGWGWAGVIWLYSIVTYFPL. At 835–948 the chain is on the cytoplasmic side; it reads DVFKFAIRYI…DIETPSHYTV (114 aa). Threonine 881 carries the phosphothreonine modification. Residue serine 899 is modified to Phosphoserine. The residue at position 931 (serine 931) is a Phosphoserine; by CIPK11. The interaction with 14-3-3 proteins stretch occupies residues 946-948; sequence YTV. A Phosphothreonine modification is found at threonine 947.

The protein belongs to the cation transport ATPase (P-type) (TC 3.A.3) family. Type IIIA subfamily. In terms of assembly, binds to 14-3-3 proteins. The binding is induced by phosphorylation of Thr-947 and it activates the H(+)-ATPase. Interacts (via the R-domain) with PSY1R (via C-terminus). Part of a functional complex containing PSKR1, BAK1, CNGC17, and AHA. Interacts with CNGC17 and PSKR1. Interacts with PP2C67/PP2C-D1 at the plasma membrane. Interacts with AHA1. Phosphorylated, probably by PHOT1 and PHOT2, at C-terminal Thr-947 in guard cells in response to blue light to induce stomatal opening. Post-translationally, phosphorylation at Thr-881 by PSY1R. This phosphorylation activates proton pumping. Decreased phosphorylation in response to flg22 elicitation. In terms of processing, phosphorylation at Ser-899 is specifically induced by RALF1, thus leading to the inhibition of proton transport. Increased phosphorylation in response to flg22 elicitation. Phosphorylation of Thr-947 induces the binding to 14-3-3 proteins, but phosphorylation of Ser-931 interferes with this binding no matter whether Thr-947 is phosphorylated or not. Decreased phosphorylation in response to flg22 elicitation. Phosphorylation of Thr-947 is enhanced by the presence of brassinolide (BL) via the BRI1-BIN2 pathway and prior the trigger of hypocotyl elongation. Inactivated by PP2C67/PP2C-D1-mediated Thr-947 dephosphorylation; SAUR19 inhibits the action of PP2C67/PP2C-D1 and thus promotes the active phosphorylated form. Post-translationally, abscisic acid induces dephosphorylation of AHA2 in etiolated seedlings, suppressing ATP hydrolysis and hypocotyl elongation. As to expression, higher levels in roots than in shoots. Expressed in epidermal and root cortex cells, in phloem, xylem and root hairs. Detected in cotyledons, leaves, hypocotyls, roots and root hairs. Expressed in guard cells and mesophyll cells.

The protein resides in the cell membrane. It carries out the reaction ATP + H2O + H(+)(in) = ADP + phosphate + 2 H(+)(out). Regulated by an auto-inhibitory C-terminal domain that can be displaced by phosphorylation of Thr-947 and the subsequent binding of 14-3-3 proteins. Negatively regulated by PKS5. PKS5 phosphorylates Ser-931, inhibiting interaction with the activating 14-3-3 protein. Positively regulated by PSY1R. PSY1R phosphorylates Thr-881, situated in the auto-inhibitory region I of the C-terminal domain, causing pump activation. Negatively regulated by the secreted peptide RALF. After specific binding to FERONIA, RALF causes phosphorylation at Ser-899, mediating the inhibition of proton transport. Activated by lysophospholipids, without the involvement of phosphorylation of Thr-947. This activation is critically dependent on the single autoinhibitory residue Leu-919. Repressed by PP2C-D phosphatases (e.g. PP2C67/PP2C-D1 and PP2C64/PP2C-D5) which dephosphorylates Thr-947. Triggered by SAUR19 via phosphorylation of the C-terminal autoinhibitory domain (e.g. Thr-947), as a result of the inhibition of PP2C67/PP2C-D1. Phosphorylation on Thr residues is repressed by tyrphostin 9, sphingosine, GW5074 and BML-265. By contrast, the fungal phytotoxin fusicoccin (FC) promotes phosphorylation of Thr-947 independently to BHP, thus leading to large stomatal opening. The plasma membrane H(+) ATPase of plants and fungi generates a proton gradient that drives the active transport of nutrients by H(+)-symport. The resulting external acidification and/or internal alkinization may mediate growth responses. Involved in maintaining the membrane potential and delta-pH, together forming the plasma membrane protonmotive force (PMF) required for root and hypocotyl elongation and root tropism. Important for root growth and development during different nitrogen regimes. Forms a functional cation-translocating unit with CNGC17 that is activated by PSKR1/BAK1 and possibly other BAK1/RLK complexes. Promotes stomatal opening in response to blue light. In Arabidopsis thaliana (Mouse-ear cress), this protein is ATPase 2, plasma membrane-type.